Consider the following 118-residue polypeptide: Small ribosomal subunit protein uS13 (118 aa).

The segment at 94 to 118 is disordered; that stretch reads GLPVRGQRTKTNARTRKGPRKPIKK.

It belongs to the universal ribosomal protein uS13 family. Part of the 30S ribosomal subunit. Forms a loose heterodimer with protein S19. Forms two bridges to the 50S subunit in the 70S ribosome.

In terms of biological role, located at the top of the head of the 30S subunit, it contacts several helices of the 16S rRNA. In the 70S ribosome it contacts the 23S rRNA (bridge B1a) and protein L5 of the 50S subunit (bridge B1b), connecting the 2 subunits; these bridges are implicated in subunit movement. Contacts the tRNAs in the A and P-sites. This chain is Small ribosomal subunit protein uS13, found in Edwardsiella ictaluri (strain 93-146).